Here is a 283-residue protein sequence, read N- to C-terminus: Probable 3-deoxy-manno-octulosonic acid transferase (283 aa).

The protein resides in the cytoplasm. The enzyme catalyses an alpha-Kdo-(2-&gt;4)-alpha-Kdo-(2-&gt;6)-lipid IVA + CMP-3-deoxy-beta-D-manno-octulosonate = an alpha-Kdo-(2-&gt;4)-alpha-Kdo-(2-&gt;4)-alpha-Kdo-(2-&gt;6)-lipid IVA + CMP + H(+). The catalysed reaction is alpha-Kdo-(2-&gt;4)-alpha-Kdo-(2-&gt;6)-lipid IVA (E. coli) + CMP-3-deoxy-beta-D-manno-octulosonate = alpha-Kdo-(2-&gt;4)-alpha-Kdo-(2-&gt;4)-alpha-Kdo-(2-&gt;6)-lipid IVA + CMP + H(+). Its pathway is bacterial outer membrane biogenesis; LPS core biosynthesis. It participates in bacterial outer membrane biogenesis; LOS core biosynthesis. Its function is as follows. Involved in the biosynthesis of the core oligosaccharide region of lipopolysaccharide (LPS). Required for the addition of 3-deoxy-D-manno-oct-2-ulosonic acid III (KdoIII) to the KdoII residue of the inner lipopolysaccharide core. May also play a role in a lipooligosaccharide (LOS) biosynthesis pathway. This Escherichia coli (strain K12) protein is Probable 3-deoxy-manno-octulosonic acid transferase.